We begin with the raw amino-acid sequence, 185 residues long: Pyruvate/ketoisovalerate oxidoreductases common subunit gamma (185 aa).

In terms of assembly, heterotetramer of one alpha, one beta, one delta and one gamma chain.

It carries out the reaction 2 oxidized [2Fe-2S]-[ferredoxin] + pyruvate + CoA = 2 reduced [2Fe-2S]-[ferredoxin] + acetyl-CoA + CO2 + H(+). The catalysed reaction is 3-methyl-2-oxobutanoate + 2 oxidized [2Fe-2S]-[ferredoxin] + CoA = 2-methylpropanoyl-CoA + 2 reduced [2Fe-2S]-[ferredoxin] + CO2 + H(+). The protein is Pyruvate/ketoisovalerate oxidoreductases common subunit gamma (porG) of Thermococcus litoralis (strain ATCC 51850 / DSM 5473 / JCM 8560 / NS-C).